We begin with the raw amino-acid sequence, 154 residues long: uncharacterized protein (154 aa).

In terms of biological role, this protein may be involved in virus assembly. Essential for virus function. This is an uncharacterized protein from Saccharolobus solfataricus (Sulfolobus solfataricus).